Here is a 285-residue protein sequence, read N- to C-terminus: Steroidogenic acute regulatory protein, mitochondrial (285 aa).

A mitochondrion-targeting transit peptide spans 1–63; sequence MLLATFKLCA…RRGSLLGSQL (63 aa). A phosphoserine; by PKA mark is found at S57 and S195. The START domain occupies 67-280; the sequence is LYSDQELAYI…LRKRLESCPA (214 aa).

As to quaternary structure, may interact with TSPO.

Its subcellular location is the mitochondrion. The catalysed reaction is cholesterol(in) = cholesterol(out). The protein operates within steroid metabolism; cholesterol metabolism. Its function is as follows. Plays a key role in steroid hormone synthesis by enhancing the metabolism of cholesterol into pregnenolone. Mediates the transfer of cholesterol from the outer mitochondrial membrane to the inner mitochondrial membrane where it is cleaved to pregnenolone. This chain is Steroidogenic acute regulatory protein, mitochondrial (STAR), found in Ovis aries (Sheep).